The sequence spans 1372 residues: Capping protein, Arp2/3 and myosin-I linker protein 3 (1372 aa).

A disordered region spans residues 126 to 151; the sequence is RGNADTPEGPRDTSPNSETSTSTTHS. Positions 138 to 151 are enriched in low complexity; the sequence is TSPNSETSTSTTHS. LRR repeat units lie at residues 244 to 264, 274 to 295, 303 to 323, 335 to 357, 365 to 385, 392 to 413, 424 to 444, 455 to 475, 482 to 501, and 509 to 530; these read SLEELVLDNAGLKTDFVQKLA, VLHALTLSHNPIEDKGFLSLSQ, GLTKLCLAKTAISPRGLQALG, SLRYLDLSKNPGLLATDEANALY, ALVHLDLSGTDCVIDLLLGAL, HLTYLNLARNSCSHRKGREAPP, TLSHVNLSATKLPLEALRALL, DLHLDLSSCELRSAGAQALQE, CVGSLDLSDNGFDSDLLTLV, and SLKHLFLGKNFNVKAKTLEEIL. 3 disordered regions span residues 865 to 900, 970 to 1003, and 1024 to 1372; these read TLSDPPGCPGQGQDLSSRGRGRNHDHEETTDDELGT, KLRHQTQGRPRPPRTTPPGPGRPSMPAPGTRQEN, and ESSS…PGTD. A compositionally biased stretch (pro residues) spans 982 to 995; the sequence is PRTTPPGPGRPSMP. Residues 1040–1073 form a necessary for localization at the cell membrane region; it reads SEAPLPPLQKKRRRGLFHFRRPRSFKGDRGPGSP. The segment covering 1048-1063 has biased composition (basic residues); it reads QKKRRRGLFHFRRPRS. Positions 1079–1098 are enriched in pro residues; sequence LPPPPPPPPTQESPPSPDPP. The segment covering 1099–1109 has biased composition (low complexity); that stretch reads SLGNNSSPCWS. Composition is skewed to basic and acidic residues over residues 1163 to 1177 and 1219 to 1229; these read ERAKGWSFDGKREGP and RRAEATWHIAE. Polar residues predominate over residues 1233–1244; it reads PNHSCQSPSPAS. Over residues 1348–1361 the composition is skewed to basic and acidic residues; the sequence is QSCDKLEPDRRRPP.

Belongs to the CARMIL family. In terms of tissue distribution, widely expressed, with much higher levels in fetal tissues than in adult ones. Up-regulated in certain cancer tissues.

It localises to the cytoplasm. Its subcellular location is the cell membrane. This chain is Capping protein, Arp2/3 and myosin-I linker protein 3, found in Homo sapiens (Human).